Consider the following 307-residue polypeptide: Aspartate carbamoyltransferase catalytic subunit (307 aa).

Residues Arg-59 and Thr-60 each coordinate carbamoyl phosphate. Position 87 (Lys-87) interacts with L-aspartate. Residues Arg-109, His-137, and Gln-140 each contribute to the carbamoyl phosphate site. L-aspartate-binding residues include Arg-173 and Arg-223. Carbamoyl phosphate is bound by residues Gly-266 and Pro-267.

This sequence belongs to the aspartate/ornithine carbamoyltransferase superfamily. ATCase family. In terms of assembly, heterododecamer (2C3:3R2) of six catalytic PyrB chains organized as two trimers (C3), and six regulatory PyrI chains organized as three dimers (R2).

It catalyses the reaction carbamoyl phosphate + L-aspartate = N-carbamoyl-L-aspartate + phosphate + H(+). It participates in pyrimidine metabolism; UMP biosynthesis via de novo pathway; (S)-dihydroorotate from bicarbonate: step 2/3. Functionally, catalyzes the condensation of carbamoyl phosphate and aspartate to form carbamoyl aspartate and inorganic phosphate, the committed step in the de novo pyrimidine nucleotide biosynthesis pathway. The sequence is that of Aspartate carbamoyltransferase catalytic subunit from Helicobacter pylori (strain ATCC 700392 / 26695) (Campylobacter pylori).